The chain runs to 243 residues: MNNIIHNDAPTPWGIYFQDGASPVYDGIVELHDQVLFYLLIVLVGVSWILFSTILRFRGSGIVHKYHNHSTTIEFVWTVSPALLLIAIAFPSFKLLYLMDEVIDPSITIKAIGHQWYWSYEYSDYTDKEGQSIEFDSYMLPTEDLEEGQLRQLEVDNRVLVPVNTPLRFIITATDVLHDFAVPSLGIKVDASPGRLNQVSTYVQREGVYYGQCSELCGVLHSSMPIVIEAVSLEKFLSWLDNQ.

Residues 1–34 lie on the Mitochondrial intermembrane side of the membrane; sequence MNNIIHNDAPTPWGIYFQDGASPVYDGIVELHDQ. The helical transmembrane segment at 35-55 threads the bilayer; that stretch reads VLFYLLIVLVGVSWILFSTIL. Topologically, residues 56-74 are mitochondrial matrix; it reads RFRGSGIVHKYHNHSTTIE. A helical transmembrane segment spans residues 75–97; the sequence is FVWTVSPALLLIAIAFPSFKLLY. The Mitochondrial intermembrane segment spans residues 98 to 243; sequence LMDEVIDPSI…EKFLSWLDNQ (146 aa). Residues histidine 178, cysteine 213, glutamate 215, cysteine 217, histidine 221, and methionine 224 each coordinate Cu cation. Position 215 (glutamate 215) interacts with Mg(2+).

This sequence belongs to the cytochrome c oxidase subunit 2 family. As to quaternary structure, component of the cytochrome c oxidase (complex IV, CIV), a multisubunit enzyme composed of a catalytic core of 3 subunits and several supernumerary subunits. The complex exists as a monomer or a dimer and forms supercomplexes (SCs) in the inner mitochondrial membrane with ubiquinol-cytochrome c oxidoreductase (cytochrome b-c1 complex, complex III, CIII). Cu cation serves as cofactor.

Its subcellular location is the mitochondrion inner membrane. The catalysed reaction is 4 Fe(II)-[cytochrome c] + O2 + 8 H(+)(in) = 4 Fe(III)-[cytochrome c] + 2 H2O + 4 H(+)(out). In terms of biological role, component of the cytochrome c oxidase, the last enzyme in the mitochondrial electron transport chain which drives oxidative phosphorylation. The respiratory chain contains 3 multisubunit complexes succinate dehydrogenase (complex II, CII), ubiquinol-cytochrome c oxidoreductase (cytochrome b-c1 complex, complex III, CIII) and cytochrome c oxidase (complex IV, CIV), that cooperate to transfer electrons derived from NADH and succinate to molecular oxygen, creating an electrochemical gradient over the inner membrane that drives transmembrane transport and the ATP synthase. Cytochrome c oxidase is the component of the respiratory chain that catalyzes the reduction of oxygen to water. Electrons originating from reduced cytochrome c in the intermembrane space (IMS) are transferred via the dinuclear copper A center (CU(A)) of subunit 2 and heme A of subunit 1 to the active site in subunit 1, a binuclear center (BNC) formed by heme A3 and copper B (CU(B)). The BNC reduces molecular oxygen to 2 water molecules using 4 electrons from cytochrome c in the IMS and 4 protons from the mitochondrial matrix. This Pneumocystis carinii protein is Cytochrome c oxidase subunit 2.